We begin with the raw amino-acid sequence, 506 residues long: Maturase K (506 aa).

Belongs to the intron maturase 2 family. MatK subfamily.

It localises to the plastid. Its subcellular location is the chloroplast. In terms of biological role, usually encoded in the trnK tRNA gene intron. Probably assists in splicing its own and other chloroplast group II introns. The polypeptide is Maturase K (Melilotus albus (White sweet clover)).